The sequence spans 197 residues: UPF0215 protein MK0057 (197 aa).

It belongs to the UPF0215 family.

This chain is UPF0215 protein MK0057, found in Methanopyrus kandleri (strain AV19 / DSM 6324 / JCM 9639 / NBRC 100938).